The chain runs to 343 residues: S-adenosylmethionine:tRNA ribosyltransferase-isomerase (343 aa).

Belongs to the QueA family. Monomer.

The protein resides in the cytoplasm. The catalysed reaction is 7-aminomethyl-7-carbaguanosine(34) in tRNA + S-adenosyl-L-methionine = epoxyqueuosine(34) in tRNA + adenine + L-methionine + 2 H(+). It functions in the pathway tRNA modification; tRNA-queuosine biosynthesis. In terms of biological role, transfers and isomerizes the ribose moiety from AdoMet to the 7-aminomethyl group of 7-deazaguanine (preQ1-tRNA) to give epoxyqueuosine (oQ-tRNA). In Borreliella burgdorferi (strain ATCC 35210 / DSM 4680 / CIP 102532 / B31) (Borrelia burgdorferi), this protein is S-adenosylmethionine:tRNA ribosyltransferase-isomerase.